The sequence spans 57 residues: Small ribosomal subunit protein bS21 (57 aa).

The tract at residues 35-57 (RERYEKPSLRRKRKQEAARKRNR) is disordered.

The protein belongs to the bacterial ribosomal protein bS21 family.

This chain is Small ribosomal subunit protein bS21, found in Thermosynechococcus vestitus (strain NIES-2133 / IAM M-273 / BP-1).